A 385-amino-acid chain; its full sequence is 1-deoxy-D-xylulose 5-phosphate reductoisomerase (385 aa).

NADPH is bound by residues T10, G11, S12, I13, K37, and N124. Residue K125 coordinates 1-deoxy-D-xylulose 5-phosphate. E126 contributes to the NADPH binding site. D150 contacts Mn(2+). Positions 151, 152, 176, and 199 each coordinate 1-deoxy-D-xylulose 5-phosphate. A Mn(2+)-binding site is contributed by E152. G205 provides a ligand contact to NADPH. 4 residues coordinate 1-deoxy-D-xylulose 5-phosphate: S212, N217, K218, and E221. E221 contributes to the Mn(2+) binding site.

The protein belongs to the DXR family. The cofactor is Mg(2+). Requires Mn(2+) as cofactor.

The catalysed reaction is 2-C-methyl-D-erythritol 4-phosphate + NADP(+) = 1-deoxy-D-xylulose 5-phosphate + NADPH + H(+). The protein operates within isoprenoid biosynthesis; isopentenyl diphosphate biosynthesis via DXP pathway; isopentenyl diphosphate from 1-deoxy-D-xylulose 5-phosphate: step 1/6. Its function is as follows. Catalyzes the NADPH-dependent rearrangement and reduction of 1-deoxy-D-xylulose-5-phosphate (DXP) to 2-C-methyl-D-erythritol 4-phosphate (MEP). The polypeptide is 1-deoxy-D-xylulose 5-phosphate reductoisomerase (Clostridium botulinum (strain Loch Maree / Type A3)).